A 401-amino-acid chain; its full sequence is Imidazolonepropionase (401 aa).

2 residues coordinate Fe(3+): histidine 70 and histidine 72. Zn(2+)-binding residues include histidine 70 and histidine 72. Arginine 79, tyrosine 142, and histidine 175 together coordinate 4-imidazolone-5-propanoate. Tyrosine 142 serves as a coordination point for N-formimidoyl-L-glutamate. Histidine 238 serves as a coordination point for Fe(3+). Histidine 238 serves as a coordination point for Zn(2+). Glutamine 241 contacts 4-imidazolone-5-propanoate. Residue aspartate 313 participates in Fe(3+) binding. Aspartate 313 contacts Zn(2+). N-formimidoyl-L-glutamate is bound by residues asparagine 315 and glycine 317. A 4-imidazolone-5-propanoate-binding site is contributed by threonine 318.

It belongs to the metallo-dependent hydrolases superfamily. HutI family. The cofactor is Zn(2+). Requires Fe(3+) as cofactor.

The protein resides in the cytoplasm. It carries out the reaction 4-imidazolone-5-propanoate + H2O = N-formimidoyl-L-glutamate. The protein operates within amino-acid degradation; L-histidine degradation into L-glutamate; N-formimidoyl-L-glutamate from L-histidine: step 3/3. In terms of biological role, catalyzes the hydrolytic cleavage of the carbon-nitrogen bond in imidazolone-5-propanoate to yield N-formimidoyl-L-glutamate. It is the third step in the universal histidine degradation pathway. The polypeptide is Imidazolonepropionase (Xanthomonas campestris pv. campestris (strain 8004)).